A 67-amino-acid polypeptide reads, in one-letter code: MKKDIHPKYEETTVTCACGNVINTRSTVKDIKVEICSQCHPFFTGKQKLVDTAGRIDRFKKRYNIKD.

Residues cysteine 16, cysteine 18, cysteine 36, and cysteine 39 each contribute to the Zn(2+) site.

This sequence belongs to the bacterial ribosomal protein bL31 family. Type A subfamily. In terms of assembly, part of the 50S ribosomal subunit. The cofactor is Zn(2+).

In terms of biological role, binds the 23S rRNA. The protein is Large ribosomal subunit protein bL31 of Treponema denticola (strain ATCC 35405 / DSM 14222 / CIP 103919 / JCM 8153 / KCTC 15104).